The following is a 283-amino-acid chain: MPDPAKPGKDLTAWKKKKQPVHRTVSQICPPPRRPLTVVDIRTGMENERLGVVRDSMFQNPLIVKAELGKPRERSCSLPGINFNYGLYIRGLDGGVPEAIGHWNVFKQQPTCPHELTRNYIAMNRGAVKAGLVTARENMLYRELNDIRINDQEDRRQKEPPPIPPNMTFGIRSRPSTPFFDLLQHRYQQLWVQEQKATQQAIKMEKKQKVILGKLYETRSSQLRKYKPPVKLDALWHMPHFKKVASHLATFPTEADRQRALKAHKEEYAVRQGTLRMGNYTHP.

The interval 151 to 170 (DQEDRRQKEPPPIPPNMTFG) is disordered.

Belongs to the CFAP77 family. In terms of assembly, microtubule inner protein component of sperm flagellar doublet microtubules.

It is found in the cytoplasm. The protein resides in the cytoskeleton. Its subcellular location is the cilium axoneme. It localises to the flagellum axoneme. Microtubule inner protein (MIP) part of the dynein-decorated doublet microtubules (DMTs) in cilia axoneme, which is required for motile cilia beating. The polypeptide is Cilia- and flagella-associated protein 77 (Mus musculus (Mouse)).